Consider the following 107-residue polypeptide: MCYYLYYRGVSLVLIVTFLSSFIFIVWLPVALVSWFEFGLSSLSSVDDSSLAVLSLPAVFSSAASPDSCLVSLIEVKGEAFICVLELTFVLELTLGEDVLEGGCLLI.

The helical transmembrane segment at 13-33 threads the bilayer; the sequence is VLIVTFLSSFIFIVWLPVALV.

The protein resides in the membrane. This is an uncharacterized protein from Saccharomyces cerevisiae (strain ATCC 204508 / S288c) (Baker's yeast).